Here is a 412-residue protein sequence, read N- to C-terminus: Fringe glycosyltransferase (412 aa).

Residues 1-15 (MMSLTVLSPPQRFKR) lie on the Cytoplasmic side of the membrane. The helical; Signal-anchor for type II membrane protein transmembrane segment at 16–34 (ILQAMMLAVAVVYMTLLLY) threads the bilayer. The Lumenal segment spans residues 35-412 (QSAYGYPGIQ…FPYFSFCPPR (378 aa)). A substrate-binding site is contributed by R164. 2 disulfide bridges follow: C204–C215 and C233–C297. Residue D237 coordinates substrate. D238 is a binding site for Mn(2+). D327 is a catalytic residue. H351 contributes to the Mn(2+) binding site. Cysteines 400 and 409 form a disulfide.

This sequence belongs to the glycosyltransferase 31 family. Mn(2+) serves as cofactor. Expressed in dorsal cells.

The protein resides in the golgi apparatus membrane. The enzyme catalyses 3-O-(alpha-L-fucosyl)-L-threonyl-[EGF-like domain protein] + UDP-N-acetyl-alpha-D-glucosamine = 3-O-(N-acetyl-beta-D-glucosaminyl-(1-&gt;3)-alpha-L-fucosyl)-L-threonyl-[EGF-like domain protein] + UDP + H(+). It carries out the reaction 3-O-(alpha-L-fucosyl)-L-seryl-[EGF-like domain protein] + UDP-N-acetyl-alpha-D-glucosamine = 3-O-(N-acetyl-beta-D-glucosaminyl-(1-&gt;3)-alpha-L-fucosyl)-L-seryl-[EGF-like domain protein] + UDP + H(+). Functionally, glycosyltransferase involved in the elongation of O-linked ligands to activate Notch signaling. Possesses fucose-specific beta-1,3-N-acetylglucosaminyltransferase activity; extends the O-linked fucose on the Notch EGF repeats. Boundary-specific cell-signaling molecule that is responsible for dorsal-ventral cell interactions during wing development. This Drosophila melanogaster (Fruit fly) protein is Fringe glycosyltransferase (fng).